Reading from the N-terminus, the 379-residue chain is Tryptophan 2,3-dioxygenase (379 aa).

Substrate-binding positions include 57–61 and arginine 128; that span reads FIITH. A heme-binding site is contributed by histidine 312. Threonine 327 contacts substrate.

The protein belongs to the tryptophan 2,3-dioxygenase family. As to quaternary structure, homotetramer. Dimer of dimers. Heme is required as a cofactor.

The catalysed reaction is L-tryptophan + O2 = N-formyl-L-kynurenine. It participates in amino-acid degradation; L-tryptophan degradation via kynurenine pathway; L-kynurenine from L-tryptophan: step 1/2. It functions in the pathway pigment biosynthesis; ommochrome biosynthesis. Heme-dependent dioxygenase that catalyzes the oxidative cleavage of the L-tryptophan (L-Trp) pyrrole ring and converts L-tryptophan to N-formyl-L-kynurenine. Catalyzes the oxidative cleavage of the indole moiety. Required during larval growth to control the level of potentially harmful free tryptophan in the hemolymph. In the adult the same reaction is the first step in the ommochrome biosynthetic pathway. The protein is Tryptophan 2,3-dioxygenase of Drosophila melanogaster (Fruit fly).